The primary structure comprises 276 residues: Rhomboid protease GlpG (276 aa).

A run of 6 helical transmembrane segments spans residues 96–116 (VTWL…IVGA), 142–162 (AFMH…WYIG), 169–189 (LGSG…GYVQ), 192–212 (FSGP…GYAW), 229–249 (LIAF…GMSM), and 250–270 (ANGA…ADTV). Residue Ser-201 is the Nucleophile of the active site. His-254 is a catalytic residue.

The protein belongs to the peptidase S54 family.

The protein localises to the cell inner membrane. The catalysed reaction is Cleaves type-1 transmembrane domains using a catalytic dyad composed of serine and histidine that are contributed by different transmembrane domains.. Rhomboid-type serine protease that catalyzes intramembrane proteolysis. In Citrobacter koseri (strain ATCC BAA-895 / CDC 4225-83 / SGSC4696), this protein is Rhomboid protease GlpG.